A 367-amino-acid polypeptide reads, in one-letter code: Uroporphyrinogen decarboxylase (367 aa).

The residue at position 1 (M1) is an N-acetylmethionine. R37, A39, R41, R50, D86, Y164, S219, and H339 together coordinate coproporphyrinogen I. R37, A39, and R41 together coordinate coproporphyrinogen III. D86, Y164, S219, and H339 together coordinate coproporphyrinogen III.

The protein belongs to the uroporphyrinogen decarboxylase family. As to quaternary structure, homodimer.

The protein localises to the cytoplasm. The protein resides in the cytosol. The catalysed reaction is uroporphyrinogen III + 4 H(+) = coproporphyrinogen III + 4 CO2. It carries out the reaction uroporphyrinogen I + 4 H(+) = coproporphyrinogen I + 4 CO2. It functions in the pathway porphyrin-containing compound metabolism; protoporphyrin-IX biosynthesis; coproporphyrinogen-III from 5-aminolevulinate: step 4/4. In terms of biological role, catalyzes the sequential decarboxylation of the four acetate side chains of uroporphyrinogen to form coproporphyrinogen and participates in the fifth step in the heme biosynthetic pathway. Isomer I or isomer III of uroporphyrinogen may serve as substrate, but only coproporphyrinogen III can ultimately be converted to heme. In vitro also decarboxylates pentacarboxylate porphyrinogen I. The polypeptide is Uroporphyrinogen decarboxylase (Ovis aries (Sheep)).